The sequence spans 338 residues: Ketol-acid reductoisomerase (NADP(+)) (338 aa).

A KARI N-terminal Rossmann domain is found at 1–181 (MRVFYDKDCD…GGGRTGIIET (181 aa)). NADP(+) is bound by residues 24–27 (YGSQ), Arg-47, Ser-50, Thr-52, and 82–85 (DEFQ). Residue His-107 is part of the active site. Position 133 (Gly-133) interacts with NADP(+). One can recognise a KARI C-terminal knotted domain in the interval 182–327 (TFKDETETDL…EKLRAMMPWI (146 aa)). Mg(2+) contacts are provided by Asp-190, Glu-194, Glu-226, and Glu-230. Ser-251 contacts substrate.

This sequence belongs to the ketol-acid reductoisomerase family. Mg(2+) is required as a cofactor.

The enzyme catalyses (2R)-2,3-dihydroxy-3-methylbutanoate + NADP(+) = (2S)-2-acetolactate + NADPH + H(+). It catalyses the reaction (2R,3R)-2,3-dihydroxy-3-methylpentanoate + NADP(+) = (S)-2-ethyl-2-hydroxy-3-oxobutanoate + NADPH + H(+). It functions in the pathway amino-acid biosynthesis; L-isoleucine biosynthesis; L-isoleucine from 2-oxobutanoate: step 2/4. Its pathway is amino-acid biosynthesis; L-valine biosynthesis; L-valine from pyruvate: step 2/4. Involved in the biosynthesis of branched-chain amino acids (BCAA). Catalyzes an alkyl-migration followed by a ketol-acid reduction of (S)-2-acetolactate (S2AL) to yield (R)-2,3-dihydroxy-isovalerate. In the isomerase reaction, S2AL is rearranged via a Mg-dependent methyl migration to produce 3-hydroxy-3-methyl-2-ketobutyrate (HMKB). In the reductase reaction, this 2-ketoacid undergoes a metal-dependent reduction by NADPH to yield (R)-2,3-dihydroxy-isovalerate. The polypeptide is Ketol-acid reductoisomerase (NADP(+)) (Pseudomonas paraeruginosa (strain DSM 24068 / PA7) (Pseudomonas aeruginosa (strain PA7))).